A 236-amino-acid chain; its full sequence is Alpha-S2-casein (236 aa).

The N-terminal stretch at 1–15 (MKFFIFTCLLAVALA) is a signal peptide. Phosphoserine is present on residues Ser23, Ser24, Ser25, Ser28, Ser47, Ser80, Ser81, Ser82, Ser85, Ser157, and Ser169. A disordered region spans residues 72–93 (PTEVYSSSSSSEESAKFPTERE). Over residues 84–93 (ESAKFPTERE) the composition is skewed to basic and acidic residues.

It belongs to the alpha-casein family. In terms of processing, there are at least three different forms found in milk, with varying degrees of phosphorylation. These include form 10-P which is phosphorylated at ten sites that have not been determined, form 11-P which is phosphorylated at eleven sites and form 12-P which is phosphorylated at twelve sites. Mammary gland specific. Secreted in milk.

It localises to the secreted. Functionally, important role in the capacity of milk to transport calcium phosphate. The sequence is that of Alpha-S2-casein from Equus asinus (Donkey).